The chain runs to 72 residues: MAKEDCIEMQGTILETLPNTMFRVELENGHVVTAHISGKMRKNYIRILTGDKVTVEMTPYDLSKGRIIFRSR.

The S1-like domain occupies Ala2 to Arg72.

Belongs to the IF-1 family. As to quaternary structure, component of the 30S ribosomal translation pre-initiation complex which assembles on the 30S ribosome in the order IF-2 and IF-3, IF-1 and N-formylmethionyl-tRNA(fMet); mRNA recruitment can occur at any time during PIC assembly.

It localises to the cytoplasm. Its function is as follows. One of the essential components for the initiation of protein synthesis. Stabilizes the binding of IF-2 and IF-3 on the 30S subunit to which N-formylmethionyl-tRNA(fMet) subsequently binds. Helps modulate mRNA selection, yielding the 30S pre-initiation complex (PIC). Upon addition of the 50S ribosomal subunit IF-1, IF-2 and IF-3 are released leaving the mature 70S translation initiation complex. The protein is Translation initiation factor IF-1 of Haemophilus influenzae (strain ATCC 51907 / DSM 11121 / KW20 / Rd).